A 415-amino-acid chain; its full sequence is MAENGDNEKMTALEAKICHQIEYYFGDFNLPRDKFLKEQIKLDEGWVPLETMIKFNRLNRLTTDFNVIVQALSKSKAKLMEVSADKTKIRRSPSRPLPEVTDEYKNDVKNRSVYIKGFPTDATLDDIKEWLDDKGQILNIQMRRTLHKTFKGSIFAVFDSIQSAKKFVEIPGQKYKDTNLLILFKEDYFAKKNEERKQSKVEAKLKAKQEHEGRHKPGSTETRALEGKMGCLLKFSGDLDDQTCREDLHFLFSNHGEIKWVDFARGAKEGIILFKEKAKEALEKARNANNGNLLLRNKKVTWKVLEGHAEKEALKKITDDQQESLNKWKSKGGHAGGRFKGSHVFTAARRFKGKGKGNRPGYAGAPKGRGQFHGRRTRFDDDDRRRGPMKRGRDGRDREEPASKHKKRENGARDK.

The HTH La-type RNA-binding domain occupies N7–E99. A phosphoserine mark is found at S92 and S94. The 77-residue stretch at R111 to D187 folds into the RRM domain. K116 is subject to N6-acetyllysine. Residue T120 is modified to Phosphothreonine. N6-acetyllysine occurs at positions 128, 327, and 356. Residues E226–T346 form the xRRM domain. Positions R349–K415 are disordered. The residue at position 377 (T377) is a Phosphothreonine. A compositionally biased stretch (basic and acidic residues) spans T377–K415.

As to quaternary structure, interacts with DDX15. May interact with RUFY1. Phosphorylated.

Its subcellular location is the nucleus. Functionally, binds to the 3' poly(U) terminus of nascent RNA polymerase III transcripts, protecting them from exonuclease digestion and facilitating their folding and maturation. In Mus musculus (Mouse), this protein is Lupus La protein homolog (Ssb).